The primary structure comprises 185 residues: Large ribosomal subunit protein uL5 (185 aa).

Belongs to the universal ribosomal protein uL5 family. In terms of assembly, part of the 50S ribosomal subunit; part of the 5S rRNA/L5/L18/L25 subcomplex. Contacts the 5S rRNA and the P site tRNA. Forms a bridge to the 30S subunit in the 70S ribosome.

Functionally, this is one of the proteins that bind and probably mediate the attachment of the 5S RNA into the large ribosomal subunit, where it forms part of the central protuberance. In the 70S ribosome it contacts protein S13 of the 30S subunit (bridge B1b), connecting the 2 subunits; this bridge is implicated in subunit movement. Contacts the P site tRNA; the 5S rRNA and some of its associated proteins might help stabilize positioning of ribosome-bound tRNAs. The sequence is that of Large ribosomal subunit protein uL5 from Azorhizobium caulinodans (strain ATCC 43989 / DSM 5975 / JCM 20966 / LMG 6465 / NBRC 14845 / NCIMB 13405 / ORS 571).